Here is a 224-residue protein sequence, read N- to C-terminus: MQILLVEDDNTLFQELKKELEQWDFNVAGIEDFGKVMDTFESFNPEIVILDVQLPKYDGFYWCRKMREVSNVPILFLSSRDNPMDQVMSMELGADDYMQKPFYTNVLIAKLQAIYRRVYEFTAEEKRTLTWQDAVVDLSKDSIQKGDQTIFLSKTEMIILEILITKKNQIVSRDTIITALWDDEAFVSDNTLTVNVNRLRKKLSEISMDSAIETKVGKGYMAHE.

The 114-residue stretch at Gln-2–Tyr-115 folds into the Response regulatory domain. Asp-51 bears the 4-aspartylphosphate mark. A DNA-binding region (ompR/PhoB-type) is located at residues Lys-126 to Glu-224. A phosphothreonine mark is found at Thr-128, Thr-130, and Thr-149.

In terms of assembly, interacts with GraX. In terms of processing, phosphorylated by GraS. Phosphorylated by Stk1; phosphorylation increases the DNA-binding activity of GraR.

The protein localises to the cytoplasm. Functionally, member of the two-component regulatory system GraR/GraS involved in resistance against cationic antimicrobial peptides (CAMPs). Upon phosphorylation by GraS, functions as a transcription regulator by direct binding to promoter regions of target genes such as adhesins, exoproteins, transporters, toxins, and proteins involved in cell wall synthesis. Down-regulates the expression of many genes involved in RNA and amino acid synthesis or glycolysis. In Staphylococcus aureus (strain USA300), this protein is Response regulator protein GraR (graR).